The following is a 234-amino-acid chain: Thiamine import ATP-binding protein ThiQ (234 aa).

Residues 2 to 230 enclose the ABC transporter domain; that stretch reads LTLQQVHYYY…HSHPELVEFF (229 aa). 32-39 contributes to the ATP binding site; it reads GPSGAGKS.

The protein belongs to the ABC transporter superfamily. Thiamine importer (TC 3.A.1.19.1) family. The complex is composed of two ATP-binding proteins (ThiQ), two transmembrane proteins (ThiP) and a solute-binding protein (ThiB).

Its subcellular location is the cell inner membrane. It carries out the reaction thiamine(out) + ATP + H2O = thiamine(in) + ADP + phosphate + H(+). In terms of biological role, part of the ABC transporter complex ThiBPQ involved in thiamine import. Responsible for energy coupling to the transport system. The sequence is that of Thiamine import ATP-binding protein ThiQ from Vibrio vulnificus (strain CMCP6).